A 504-amino-acid polypeptide reads, in one-letter code: Signal transduction histidine-protein kinase/phosphatase MprB (504 aa).

The Cytoplasmic segment spans residues 1 to 26 (MWWFRRRDRAPLRATSSLSLRWRVML). Residues 27–47 (LAMSMVAMVVVLMSFAVYAVI) traverse the membrane as a helical segment. Residues 48 to 163 (SAALYSDIDN…PTEAVMNKLR (116 aa)) lie on the Extracellular side of the membrane. A helical membrane pass occupies residues 164–184 (WVLLIVGGIGVAVAAVAGGMV). The Cytoplasmic portion of the chain corresponds to 185 to 504 (TRAGLRPVGR…SVESQSTRAT (320 aa)). Positions 186-238 (RAGLRPVGRLTEAAERVARTDDLRPIPVFGSDELARLTEAFNLMLRALAESRE) constitute an HAMP domain. The 221-residue stretch at 246–466 (DAGHELRTPL…SIYVLLPGRR (221 aa)) folds into the Histidine kinase domain. His-249 is modified (phosphohistidine; by autocatalysis). The segment at 471 to 504 (QLPGATAGARSTDIENSRGSANVISVESQSTRAT) is disordered. Over residues 487 to 504 (SRGSANVISVESQSTRAT) the composition is skewed to polar residues.

Mg(2+) is required as a cofactor. It depends on Mn(2+) as a cofactor. Autophosphorylated.

It is found in the cell membrane. The catalysed reaction is ATP + protein L-histidine = ADP + protein N-phospho-L-histidine.. Functionally, member of the two-component regulatory system MprB/MprA which contributes to maintaining a balance among several systems involved in stress resistance and is required for establishment and maintenance of persistent infection in the host. In response to environmental signals MprB acts both as a membrane-associated protein kinase that undergoes autophosphorylation and subsequently transfers the phosphate to MprA, and a protein phosphatase that dephosphorylates phospho-MprA. MprB/MprA up-regulates expression of mprA and pepD. In Mycobacterium bovis (strain ATCC BAA-935 / AF2122/97), this protein is Signal transduction histidine-protein kinase/phosphatase MprB (mprB).